The sequence spans 280 residues: Large ribosomal subunit protein uL2 (280 aa).

Disordered stretches follow at residues 1-59 (MAIR…GGHK) and 223-280 (GVVM…NKKR). Residues 23–33 (ELTRSTPEKSL) are compositionally biased toward basic and acidic residues. Basic residues-rich tracts occupy residues 36–59 (PLHK…GGHK) and 269–280 (VRRRRSNKNKKR).

It belongs to the universal ribosomal protein uL2 family. As to quaternary structure, part of the 50S ribosomal subunit. Forms a bridge to the 30S subunit in the 70S ribosome.

Its function is as follows. One of the primary rRNA binding proteins. Required for association of the 30S and 50S subunits to form the 70S ribosome, for tRNA binding and peptide bond formation. It has been suggested to have peptidyltransferase activity; this is somewhat controversial. Makes several contacts with the 16S rRNA in the 70S ribosome. This is Large ribosomal subunit protein uL2 from Corynebacterium kroppenstedtii (strain DSM 44385 / JCM 11950 / CIP 105744 / CCUG 35717).